Reading from the N-terminus, the 488-residue chain is Glutamate--tRNA ligase (488 aa).

The 'HIGH' region signature appears at 8-18; sequence PSPTGPLHIGG. Zn(2+)-binding residues include cysteine 105, cysteine 107, cysteine 132, and histidine 134. The 'KMSKS' region motif lies at 249–253; it reads KMSKR. Lysine 252 provides a ligand contact to ATP.

It belongs to the class-I aminoacyl-tRNA synthetase family. Glutamate--tRNA ligase type 1 subfamily. In terms of assembly, monomer. Zn(2+) serves as cofactor.

The protein resides in the cytoplasm. The enzyme catalyses tRNA(Glu) + L-glutamate + ATP = L-glutamyl-tRNA(Glu) + AMP + diphosphate. Its function is as follows. Catalyzes the attachment of glutamate to tRNA(Glu) in a two-step reaction: glutamate is first activated by ATP to form Glu-AMP and then transferred to the acceptor end of tRNA(Glu). In Desulfitobacterium hafniense (strain Y51), this protein is Glutamate--tRNA ligase.